Here is a 134-residue protein sequence, read N- to C-terminus: Small ribosomal subunit protein uS8c (134 aa).

The protein belongs to the universal ribosomal protein uS8 family. As to quaternary structure, part of the 30S ribosomal subunit.

It is found in the plastid. Its subcellular location is the chloroplast. One of the primary rRNA binding proteins, it binds directly to 16S rRNA central domain where it helps coordinate assembly of the platform of the 30S subunit. The sequence is that of Small ribosomal subunit protein uS8c (rps8) from Lotus japonicus (Lotus corniculatus var. japonicus).